Here is a 20-residue protein sequence, read N- to C-terminus: TVIDVKCTSPKQCLPPCAKQ.

Belongs to the short scorpion toxin superfamily. Potassium channel inhibitor family. Alpha-KTx 02 subfamily. Expressed by the venom gland.

The protein resides in the secreted. Functionally, potent selective inhibitor of Kv1/KCNA voltage-gated potassium channels. The chain is Hongotoxin-5 from Centruroides limbatus (Bark scorpion).